Reading from the N-terminus, the 636-residue chain is 1-deoxy-D-xylulose-5-phosphate synthase (636 aa).

Residues His-75 and 116-118 each bind thiamine diphosphate; that span reads AHS. Asp-147 provides a ligand contact to Mg(2+). Thiamine diphosphate is bound by residues 148 to 149, Asn-177, Tyr-288, and Glu-370; that span reads GA. Asn-177 contacts Mg(2+).

It belongs to the transketolase family. DXPS subfamily. As to quaternary structure, homodimer. Mg(2+) serves as cofactor. The cofactor is thiamine diphosphate.

The enzyme catalyses D-glyceraldehyde 3-phosphate + pyruvate + H(+) = 1-deoxy-D-xylulose 5-phosphate + CO2. It participates in metabolic intermediate biosynthesis; 1-deoxy-D-xylulose 5-phosphate biosynthesis; 1-deoxy-D-xylulose 5-phosphate from D-glyceraldehyde 3-phosphate and pyruvate: step 1/1. Functionally, catalyzes the acyloin condensation reaction between C atoms 2 and 3 of pyruvate and glyceraldehyde 3-phosphate to yield 1-deoxy-D-xylulose-5-phosphate (DXP). The protein is 1-deoxy-D-xylulose-5-phosphate synthase of Ralstonia pickettii (strain 12J).